The chain runs to 190 residues: Glutathione peroxidase 2 (190 aa).

Sec-40 is a catalytic residue. A non-standard amino acid (selenocysteine) is located at residue Sec-40.

The protein belongs to the glutathione peroxidase family. Homotetramer. Mostly in liver and gastrointestinal tract, not found in heart or kidney.

Its subcellular location is the cytoplasm. It is found in the cytosol. It catalyses the reaction 2 glutathione + H2O2 = glutathione disulfide + 2 H2O. The enzyme catalyses a hydroperoxy polyunsaturated fatty acid + 2 glutathione = a hydroxy polyunsaturated fatty acid + glutathione disulfide + H2O. The catalysed reaction is tert-butyl hydroperoxide + 2 glutathione = tert-butanol + glutathione disulfide + H2O. It carries out the reaction cumene hydroperoxide + 2 glutathione = 2-phenylpropan-2-ol + glutathione disulfide + H2O. It catalyses the reaction (13S)-hydroperoxy-(9Z,11E)-octadecadienoate + 2 glutathione = (13S)-hydroxy-(9Z,11E)-octadecadienoate + glutathione disulfide + H2O. The enzyme catalyses (5S)-hydroperoxy-(6E,8Z,11Z,14Z)-eicosatetraenoate + 2 glutathione = (5S)-hydroxy-(6E,8Z,11Z,14Z)-eicosatetraenoate + glutathione disulfide + H2O. The catalysed reaction is (12R)-hydroperoxy-(5Z,8Z,10E,14Z)-eicosatetraenoate + 2 glutathione = (12R)-hydroxy-(5Z,8Z,10E,14Z)-eicosatetraenoate + glutathione disulfide + H2O. It carries out the reaction (15S)-hydroperoxy-(5Z,8Z,11Z,13E)-eicosatetraenoate + 2 glutathione = (15S)-hydroxy-(5Z,8Z,11Z,13E)-eicosatetraenoate + glutathione disulfide + H2O. Its function is as follows. Catalyzes the reduction of hydroperoxides in a glutathione-dependent manner thus regulating cellular redox homeostasis. Can reduce small soluble hydroperoxides such as H2O2, cumene hydroperoxide and tert-butyl hydroperoxide, as well as several fatty acid-derived hydroperoxides. Cannot reduce phosphatidycholine hydroperoxide. The chain is Glutathione peroxidase 2 from Homo sapiens (Human).